The primary structure comprises 441 residues: tRNA modification GTPase MnmE (441 aa).

(6S)-5-formyl-5,6,7,8-tetrahydrofolate-binding residues include R21, E79, and K118. The TrmE-type G domain maps to 214 to 367; sequence GIHITILGAP…LVAELARVVE (154 aa). Residues 224–229, 243–249, and 268–271 contribute to the GTP site; these read NAGKSS, SAQAGTT, and DTAG. The Mg(2+) site is built by S228 and T249. A (6S)-5-formyl-5,6,7,8-tetrahydrofolate-binding site is contributed by K441.

It belongs to the TRAFAC class TrmE-Era-EngA-EngB-Septin-like GTPase superfamily. TrmE GTPase family. Homodimer. Heterotetramer of two MnmE and two MnmG subunits. The cofactor is K(+).

It localises to the cytoplasm. Functionally, exhibits a very high intrinsic GTPase hydrolysis rate. Involved in the addition of a carboxymethylaminomethyl (cmnm) group at the wobble position (U34) of certain tRNAs, forming tRNA-cmnm(5)s(2)U34. The polypeptide is tRNA modification GTPase MnmE (Paramagnetospirillum magneticum (strain ATCC 700264 / AMB-1) (Magnetospirillum magneticum)).